The primary structure comprises 147 residues: Ribonuclease pancreatic gamma-type (147 aa).

The first 25 residues, 1–25 (MGLEKSFLLFSLLVLVLGWVQPSLG), serve as a signal peptide directing secretion. Substrate-binding residues include K35 and R38. H40 acts as the Proton acceptor in catalysis. 4 cysteine pairs are disulfide-bonded: C54–C112, C68–C123, C86–C138, and C93–C100. Residues 69–73 (KPMNT), K94, and R113 contribute to the substrate site. The active-site Proton donor is the H142.

It belongs to the pancreatic ribonuclease family. In terms of assembly, monomer.

It is found in the secreted. It carries out the reaction an [RNA] containing cytidine + H2O = an [RNA]-3'-cytidine-3'-phosphate + a 5'-hydroxy-ribonucleotide-3'-[RNA].. The catalysed reaction is an [RNA] containing uridine + H2O = an [RNA]-3'-uridine-3'-phosphate + a 5'-hydroxy-ribonucleotide-3'-[RNA].. Functionally, endonuclease that catalyzes the cleavage of RNA on the 3' side of pyrimidine nucleotides. Acts on single-stranded and double-stranded RNA. The protein is Ribonuclease pancreatic gamma-type of Rattus rattus (Black rat).